The primary structure comprises 305 residues: Heme A synthase (305 aa).

The Cytoplasmic portion of the chain corresponds to 1–6 (MKKFLK). Residues 7–27 (VWSVLTIICMTVVVFGGALVT) traverse the membrane as a helical segment. The Extracellular portion of the chain corresponds to 28-63 (KTGSADGCGNSWPLCNGQLVRLTDVTPEKLIEFMHR). Residues Cys35 and Cys42 are joined by a disulfide bond. Glu59 is a catalytic residue. Position 62 (His62) interacts with heme o. Residues 64–84 (MTTGISSIFVIVLAICAWIYM) traverse the membrane as a helical segment. Over 85–92 (KNRRETKP) the chain is Cytoplasmic. The chain crosses the membrane as a helical span at residues 93 to 113 (LAIIAVLFLIIQALMGMAAVV). Residues 114-122 (WGQNPYIMA) lie on the Extracellular side of the membrane. Residues 123 to 143 (LHFGISIICYASIVLLALMIF) traverse the membrane as a helical segment. A heme o-binding site is contributed by His124. At 144 to 160 (EVDRKFDARNLVMGTKL) the chain is on the cytoplasmic side. A helical membrane pass occupies residues 161–181 (RINIYALTIYTYLAVYTGALV). Residues 182 to 212 (RHEKASMAVPVWPFENGHFIMPTSVQDYVQY) lie on the Extracellular side of the membrane. The chain crosses the membrane as a helical span at residues 213–233 (FHRLAAFILIVWLLYVTWLVF). Position 214 (His214) interacts with heme b. Residues 234–240 (RDYRRYR) are Cytoplasmic-facing. Residues 241–261 (VLTFSMVLSLVFIALQAVTGA) traverse the membrane as a helical segment. The Extracellular portion of the chain corresponds to 262-271 (LSVYTGVNLY). Residues 272–292 (IALAHSLIITMLFALLCYLCL) traverse the membrane as a helical segment. Heme b is bound at residue His276. Residues 293–305 (LASRSKSNRLRIK) lie on the Cytoplasmic side of the membrane.

It belongs to the COX15/CtaA family. Type 1 subfamily. As to quaternary structure, interacts with CtaB. Requires heme b as cofactor.

The protein resides in the cell membrane. The enzyme catalyses Fe(II)-heme o + 2 A + H2O = Fe(II)-heme a + 2 AH2. It functions in the pathway porphyrin-containing compound metabolism; heme A biosynthesis; heme A from heme O: step 1/1. Its function is as follows. Catalyzes the conversion of heme O to heme A by two successive hydroxylations of the methyl group at C8. The first hydroxylation forms heme I, the second hydroxylation results in an unstable dihydroxymethyl group, which spontaneously dehydrates, resulting in the formyl group of heme A. The polypeptide is Heme A synthase (Listeria monocytogenes serotype 4b (strain F2365)).